Consider the following 56-residue polypeptide: Large ribosomal subunit protein bL33 (56 aa).

It belongs to the bacterial ribosomal protein bL33 family.

This chain is Large ribosomal subunit protein bL33, found in Anaplasma marginale (strain Florida).